A 217-amino-acid chain; its full sequence is Ribonuclease HII (217 aa).

The RNase H type-2 domain maps to 17-207 (KVIYGVDEAG…CVGQSVSGAR (191 aa)). The a divalent metal cation site is built by aspartate 23, glutamate 24, and aspartate 116.

Belongs to the RNase HII family. The cofactor is Mn(2+). Requires Mg(2+) as cofactor.

The protein resides in the cytoplasm. The catalysed reaction is Endonucleolytic cleavage to 5'-phosphomonoester.. Functionally, endonuclease that specifically degrades the RNA of RNA-DNA hybrids. The polypeptide is Ribonuclease HII (Nitrosomonas europaea (strain ATCC 19718 / CIP 103999 / KCTC 2705 / NBRC 14298)).